Consider the following 401-residue polypeptide: Ribosomal RNA large subunit methyltransferase G (401 aa).

It belongs to the methyltransferase superfamily. RlmG family.

The protein localises to the cytoplasm. It carries out the reaction guanosine(1835) in 23S rRNA + S-adenosyl-L-methionine = N(2)-methylguanosine(1835) in 23S rRNA + S-adenosyl-L-homocysteine + H(+). In terms of biological role, specifically methylates the guanine in position 1835 (m2G1835) of 23S rRNA. This chain is Ribosomal RNA large subunit methyltransferase G, found in Shewanella loihica (strain ATCC BAA-1088 / PV-4).